The primary structure comprises 391 residues: Inactive polyketide synthase 2 (391 aa).

C164 is a catalytic residue.

Belongs to the thiolase-like superfamily. Chalcone/stilbene synthases family. In terms of assembly, homodimer.

The chain is Inactive polyketide synthase 2 (PKS2) from Rubus idaeus (Raspberry).